The following is a 1380-amino-acid chain: Protein TORNADO 1 (1380 aa).

LRR repeat units lie at residues 26–46, 47–70, 105–132, 161–184, 266–289, 299–322, 323–346, 348–371, 446–472, and 476–502; these read FFNLQTLSFSSSGNTTHCQLI, TESSMNINVTRDNLTSLSQIFIEL, TSKIKQLAFRKNRFSEQCLNELSEILKR, NDSLEELQIWEDSIGSKGAEELSR, NTTVRSLDMTGAKLNSRWAKEFRW, EVKLSKTGLKDKAVVYIAAGLFKN, KSLQSLYVDGNRFGSVGVEDLLCP, SRFSALQLQANITLRSIVFGGSNT, INPLIEEIDLARTPLQDSGKADEIYQK, and NGRKIDEAETDDSLKDMPLTEPKSVRA. The Roc domain occupies 493-702; it reads PLTEPKSVRA…HHIRMTSKAI (210 aa). GTP contacts are provided by residues 506–513 and 567–571; these read GQNYAGKT and NLAGQ. A helical transmembrane segment spans residues 574-594; sequence FFALHDLMFPSPCFFLIVLSL. LRR repeat units lie at residues 640–665, 688–712, 799–826, 1023–1046, 1131–1154, and 1229–1254; these read LTHSEKINLQSESFQATVGCIQRLRD, VSKLTHHIRMTSKAILQRVPRVYQL, LTQLIKLDVRKQSTGERNGFVSRKELEK, QSQFVSLHRLKEALSSVPAETMYD, EAVLQRLKIIEQEIRDLKQEIQGL, and QLGCDVMQIDNQAVKCLAPYMTNFMK. 641 to 644 is a binding site for GTP; it reads THSE. A COR domain is found at 757–931; that stretch reads NIQIVETRRH…LQVHLHNRIM (175 aa). 2 helical membrane passes run 1255–1275 and 1287–1307; these read LVTFALRIGANWAAGMGHMIP and PAVMTGAAGAAGAIGVAAALG.

As to expression, expressed in seedlings, roots, leaves, stems and flowers. Present in ovules, prominently in nucellus and integuments.

The protein localises to the membrane. Functionally, involved in the basipetal transport of auxin (IAA) that modulates growth and organs organization. Required for initial divisions in the epidermal/lateral root cap leading to the formation of epidermal cells and a clone of lateral root cap cells, as well as for the maintenance of the radial pattern of cell specification in the root, thus regulating the distinction between the lateral root cap and epidermis. In Arabidopsis thaliana (Mouse-ear cress), this protein is Protein TORNADO 1 (TRN1).